A 476-amino-acid chain; its full sequence is Glycogen synthase (476 aa).

Lysine 15 provides a ligand contact to ADP-alpha-D-glucose.

Belongs to the glycosyltransferase 1 family. Bacterial/plant glycogen synthase subfamily.

It carries out the reaction [(1-&gt;4)-alpha-D-glucosyl](n) + ADP-alpha-D-glucose = [(1-&gt;4)-alpha-D-glucosyl](n+1) + ADP + H(+). It participates in glycan biosynthesis; glycogen biosynthesis. Its function is as follows. Synthesizes alpha-1,4-glucan chains using ADP-glucose. The sequence is that of Glycogen synthase from Yersinia pestis bv. Antiqua (strain Antiqua).